The sequence spans 431 residues: Elongation factor 1-gamma (431 aa).

In terms of domain architecture, GST N-terminal spans Val2 to Gly84. The GST C-terminal domain maps to Cys86–Phe212. A disordered region spans residues Lys223–Ala261. A compositionally biased stretch (low complexity) spans Ala226–Gln236. The span at Lys237–Glu254 shows a compositional bias: basic and acidic residues. The 160-residue stretch at Ser272–Lys431 folds into the EF-1-gamma C-terminal domain. Ser294 carries the phosphoserine modification.

As to quaternary structure, interacts with microtubules. May interact with BicDR; the interaction is probably indirect. Interacts (via C-terminus) with Doa; the interaction is probably direct, is transient and leads to phosphorylation of eEF1gamma by Doa. EF-1 is composed of four subunits: alpha, beta, delta, and gamma. In terms of processing, phosphorylated on Ser-294 by LAMMER kinases, including Doa. Phosphorylation on Ser-294 by Doa is required for negative regulation of microtubule-based transport.

The protein localises to the cytoplasm. The protein resides in the nucleus. It localises to the cytoskeleton. In terms of biological role, microtubule binding protein involved in regulation of microtubule-based transport. Probably plays a role in anchoring the EF-1 complex to other cellular components. Probably involved in formation and/or development of mechanosensory organs during metamorphosis. Required for cellular and organismal viability. Not essential for the innate immune response to bacterial infection. The sequence is that of Elongation factor 1-gamma from Drosophila melanogaster (Fruit fly).